The chain runs to 335 residues: Pyruvate dehydrogenase E1 component subunit beta (335 aa).

Thiamine diphosphate is bound at residue Glu-60. Ala-161, Ile-162, and Asn-166 together coordinate K(+).

As to quaternary structure, heterodimer of an alpha and a beta chain. It depends on thiamine diphosphate as a cofactor.

It is found in the plastid. It localises to the chloroplast. It catalyses the reaction N(6)-[(R)-lipoyl]-L-lysyl-[protein] + pyruvate + H(+) = N(6)-[(R)-S(8)-acetyldihydrolipoyl]-L-lysyl-[protein] + CO2. In terms of biological role, the pyruvate dehydrogenase complex catalyzes the overall conversion of pyruvate to acetyl-CoA and CO(2). It contains multiple copies of three enzymatic components: pyruvate dehydrogenase (E1), dihydrolipoamide acetyltransferase (E2) and lipoamide dehydrogenase (E3). The protein is Pyruvate dehydrogenase E1 component subunit beta (pdhB) of Chlorokybus atmophyticus (Soil alga).